The chain runs to 402 residues: uncharacterized protein (402 aa).

Transmembrane regions (helical) follow at residues Ile23–Val43, Leu52–Leu72, Val90–Ile110, Leu121–Gly141, Trp158–Val178, Trp180–Leu200, Gly228–Tyr248, Ala255–Phe275, Leu282–Leu302, Trp309–Phe329, Leu351–Phe371, and Ser375–His395.

Belongs to the major facilitator superfamily. YhhS family.

The protein resides in the cell inner membrane. This is an uncharacterized protein from Pseudomonas aeruginosa (strain ATCC 15692 / DSM 22644 / CIP 104116 / JCM 14847 / LMG 12228 / 1C / PRS 101 / PAO1).